The primary structure comprises 166 residues: Large ribosomal subunit protein uL10 (166 aa).

Belongs to the universal ribosomal protein uL10 family. In terms of assembly, part of the ribosomal stalk of the 50S ribosomal subunit. The N-terminus interacts with L11 and the large rRNA to form the base of the stalk. The C-terminus forms an elongated spine to which L12 dimers bind in a sequential fashion forming a multimeric L10(L12)X complex.

In terms of biological role, forms part of the ribosomal stalk, playing a central role in the interaction of the ribosome with GTP-bound translation factors. The polypeptide is Large ribosomal subunit protein uL10 (Pseudomonas syringae pv. tomato (strain ATCC BAA-871 / DC3000)).